We begin with the raw amino-acid sequence, 122 residues long: MIQMQTILDVADNSGAKKLFCIKVLGGSKRKYAGVGDIIVASVREALPNSKVKKGDVVKAVIVRTAKELGRPDGSYIRFDDNSGVVINNQKEPVGTRIFGPVARELRAKKFMKIISLAPEVL.

The protein belongs to the universal ribosomal protein uL14 family. As to quaternary structure, part of the 50S ribosomal subunit. Forms a cluster with proteins L3 and L19. In the 70S ribosome, L14 and L19 interact and together make contacts with the 16S rRNA in bridges B5 and B8.

Functionally, binds to 23S rRNA. Forms part of two intersubunit bridges in the 70S ribosome. The chain is Large ribosomal subunit protein uL14 from Pelobacter propionicus (strain DSM 2379 / NBRC 103807 / OttBd1).